Reading from the N-terminus, the 323-residue chain is Peroxisomal and mitochondrial division factor 2 (323 aa).

Disordered stretches follow at residues 1–55 (MAEE…NDAI), 73–92 (ESKAKRKMGEMEREIDKSDE), and 120–143 (TARTEGEEATAEAEKLRSEISQKG). The Cytoplasmic segment spans residues 1 to 297 (MAEERSLNGE…WSPNVTAVGS (297 aa)). Positions 13–26 (GQDDESFFDSDQQG) are enriched in acidic residues. Residues 28–278 (DGKSTELNQK…INGLKNVVEE (251 aa)) are a coiled coil. The chain crosses the membrane as a helical span at residues 298 to 318 (GGAVAAVAVAVAGAAVVCYIY). At 319–323 (HSRRV) the chain is on the mitochondrial intermembrane side.

Homodimer. Interacts with PMD1.

Its subcellular location is the mitochondrion outer membrane. In terms of biological role, involved in morphogenesis and proliferation of mitochondria. Does not act redundantly with PMD1. Is not involved in peroxisomal proliferation. The chain is Peroxisomal and mitochondrial division factor 2 from Arabidopsis thaliana (Mouse-ear cress).